Reading from the N-terminus, the 379-residue chain is Chaperone protein DnaJ (379 aa).

The J domain maps to 5–69 (DYYEVLGISK…NKRASYDQFG (65 aa)). The segment at 136 to 218 (GTTKEISIRK…CHGKGTENKT (83 aa)) adopts a CR-type zinc-finger fold. Zn(2+) contacts are provided by C149, C152, C166, C169, C192, C195, C206, and C209. 4 CXXCXGXG motif repeats span residues 149–156 (CETCHGDG), 166–173 (CSYCNGAG), 192–199 (CPKCNGSG), and 206–213 (CPTCHGKG).

It belongs to the DnaJ family. As to quaternary structure, homodimer. Zn(2+) is required as a cofactor.

Its subcellular location is the cytoplasm. Its function is as follows. Participates actively in the response to hyperosmotic and heat shock by preventing the aggregation of stress-denatured proteins and by disaggregating proteins, also in an autonomous, DnaK-independent fashion. Unfolded proteins bind initially to DnaJ; upon interaction with the DnaJ-bound protein, DnaK hydrolyzes its bound ATP, resulting in the formation of a stable complex. GrpE releases ADP from DnaK; ATP binding to DnaK triggers the release of the substrate protein, thus completing the reaction cycle. Several rounds of ATP-dependent interactions between DnaJ, DnaK and GrpE are required for fully efficient folding. Also involved, together with DnaK and GrpE, in the DNA replication of plasmids through activation of initiation proteins. In Staphylococcus aureus (strain bovine RF122 / ET3-1), this protein is Chaperone protein DnaJ.